We begin with the raw amino-acid sequence, 148 residues long: Putative lysozyme C-2 (148 aa).

Positions 1–18 (MKALLVLGFLLLSASVQA) are cleaved as a signal peptide. Residues 19-148 (KVFKHCELAR…LSGYIRNCGV (130 aa)) enclose the C-type lysozyme domain. Cystine bridges form between C24–C146, C48–C134, C83–C99, and C95–C113. Residues E53 and D71 contribute to the active site.

Belongs to the glycosyl hydrolase 22 family. In terms of assembly, monomer.

The protein resides in the secreted. It catalyses the reaction Hydrolysis of (1-&gt;4)-beta-linkages between N-acetylmuramic acid and N-acetyl-D-glucosamine residues in a peptidoglycan and between N-acetyl-D-glucosamine residues in chitodextrins.. Its function is as follows. Lysozymes have primarily a bacteriolytic function; those in tissues and body fluids are associated with the monocyte-macrophage system and enhance the activity of immunoagents. In the intestine they may also have a digestive function. In Rattus norvegicus (Rat), this protein is Putative lysozyme C-2 (Lyz2).